Consider the following 291-residue polypeptide: MPELPEVETVRRGLEPVLMGSRIISVSLGCKNLRFPFPESFSERLTGRIIIKLSRRAKYLLFHLSQNETIVSHLGMSGSWRVEDDLLRKKHSYMGKLVAHDHFIMSFQATNGKIYRLIYNDSRRFGFMLLADTMRLYEHPLLRNLGLEPIDNAVSGAYLQKAFINKKTSLKAALLDQSIVAGLGNIYVCEALWRSYLSPERRALTLASKSAHACELAKCLAQNICDVISEAIFSGGSSLRDYVHIDGSLGYFQHCFSVYGREGKECSRCGMHIVRIVQSGRSSFYCPQCQK.

Proline 2 acts as the Schiff-base intermediate with DNA in catalysis. Residue glutamate 3 is the Proton donor of the active site. Catalysis depends on lysine 58, which acts as the Proton donor; for beta-elimination activity. Residues histidine 100, arginine 123, and lysine 166 each coordinate DNA. The FPG-type zinc finger occupies 257–291 (SVYGREGKECSRCGMHIVRIVQSGRSSFYCPQCQK). Arginine 281 acts as the Proton donor; for delta-elimination activity in catalysis.

It belongs to the FPG family. In terms of assembly, monomer. Zn(2+) serves as cofactor.

The enzyme catalyses Hydrolysis of DNA containing ring-opened 7-methylguanine residues, releasing 2,6-diamino-4-hydroxy-5-(N-methyl)formamidopyrimidine.. It catalyses the reaction 2'-deoxyribonucleotide-(2'-deoxyribose 5'-phosphate)-2'-deoxyribonucleotide-DNA = a 3'-end 2'-deoxyribonucleotide-(2,3-dehydro-2,3-deoxyribose 5'-phosphate)-DNA + a 5'-end 5'-phospho-2'-deoxyribonucleoside-DNA + H(+). Its function is as follows. Involved in base excision repair of DNA damaged by oxidation or by mutagenic agents. Acts as a DNA glycosylase that recognizes and removes damaged bases. Has a preference for oxidized purines, such as 7,8-dihydro-8-oxoguanine (8-oxoG). Has AP (apurinic/apyrimidinic) lyase activity and introduces nicks in the DNA strand. Cleaves the DNA backbone by beta-delta elimination to generate a single-strand break at the site of the removed base with both 3'- and 5'-phosphates. The polypeptide is Formamidopyrimidine-DNA glycosylase (Bartonella bacilliformis (strain ATCC 35685 / KC583 / Herrer 020/F12,63)).